Reading from the N-terminus, the 367-residue chain is MGKKKKRATEKVWCYYCDREFDDEKILVQHQKAKHFKCHVCHKKLSTASGMVIHVLQVHKENVTKVPNAKDGRDSTDIEIYGMQGIPPHVLTAHYGEEEDEPPAKVAKVEIPSAPLGGVVPRPYGMVYPPQQVPGAVPARPMYYPGPPMRHPAPVWQMPPPRPQQWYPQNPALSVPPAAHLGYRPQPLFPVQNMGMTPTPTSAPAIQPSPVTGVTPPGIPTSSPAMPVPQPLFPVVNNSIPSQAPPFSAPLPVGGAQQPSHADALGSADAYPPNNSIPGGTNAHSYASGPNTSGPSIGPPPVIANKAPSNQPNEVYLVWDDEAMSMEERRMSLPKYKVHDETSQMNSINAAIDRRISESRLAGRMAF.

The BED-type zinc finger occupies 7-66 (RATEKVWCYYCDREFDDEKILVQHQKAKHFKCHVCHKKLSTASGMVIHVLQVHKENVTKV). Zn(2+) contacts are provided by Cys-38, Cys-41, His-54, and His-59. The interval 246–309 (PFSAPLPVGG…PPVIANKAPS (64 aa)) is disordered. Over residues 273–295 (PNNSIPGGTNAHSYASGPNTSGP) the composition is skewed to polar residues.

In terms of assembly, homodimer. Component of the transcription activator complex FRI-C composed of FRI, FRL1, SUF4, FLX and FES1. Interacts with LD, ASHH2, FRL1, (via C-terminus) with FRI (via C-terminus), and with SWC6, a component of the SWR1 chromatin-remodeling complex. Binds to MED18 to regulate flowering time; recruits MED18 to FLC promoter. In terms of tissue distribution, expressed in root, shoot apex, leaves, stem and flowers. Expressed in expanding leaves, in the vasculature of fully expanded leaves, in the inflorescence, throughout young floral primordia, in the carpels of older flowers and in fertilized ovules.

Its subcellular location is the nucleus. In terms of biological role, sequence-specific DNA binding factor that recognizes the 5'-CCAAATTTTAAGTTT-3' sequence. Recruits the FRI-C complex to the FLC promoter. Required for FRI-mediated FLC activation, but has no effect on the expression of MAF1, MAF2, MAF3, MAF5, UFC and CO. Dispensable for the reactivation of FLC in early embryogenesis, but required to maintain high levels of FLC expression in later embryonic and vegetative development. The protein is Protein SUPPRESSOR OF FRI 4 of Arabidopsis thaliana (Mouse-ear cress).